The sequence spans 279 residues: Prephenate dehydratase (279 aa).

The Prephenate dehydratase domain occupies 2-178 (KIAYLGPRGS…NSTRFWLLGK (177 aa)). The region spanning 194–270 (LALTLPDNLP…LGVKVRLLGN (77 aa)) is the ACT domain.

The enzyme catalyses prephenate + H(+) = 3-phenylpyruvate + CO2 + H2O. It functions in the pathway amino-acid biosynthesis; L-phenylalanine biosynthesis; phenylpyruvate from prephenate: step 1/1. In Lactococcus lactis subsp. lactis (strain IL1403) (Streptococcus lactis), this protein is Prephenate dehydratase (pheA).